Consider the following 56-residue polypeptide: uncharacterized protein (56 aa).

This is an uncharacterized protein from Schizosaccharomyces pombe (strain 972 / ATCC 24843) (Fission yeast).